The sequence spans 37 residues: Large ribosomal subunit protein bL36c (37 aa).

The protein belongs to the bacterial ribosomal protein bL36 family.

It is found in the plastid. In Epifagus virginiana (Beechdrops), this protein is Large ribosomal subunit protein bL36c (rpl36).